Here is a 172-residue protein sequence, read N- to C-terminus: L-methionine sulfoximine/L-methionine sulfone acetyltransferase (172 aa).

Positions 3-166 (ASIRDAGVAD…DLTFMQLNLD (164 aa)) constitute an N-acetyltransferase domain. Substrate-binding positions include 75–77 (RPF) and 85–87 (EHS). Acetyl-CoA contacts are provided by residues 88–90 (VYV), 96–101 (GKGLGV), and Asn127.

Homodimer.

It catalyses the reaction L-methionine sulfoximine + acetyl-CoA = N-acetyl-L-methionine sulfoximine + CoA + H(+). The enzyme catalyses L-methionine sulfone + acetyl-CoA = N-acetyl-L-methionine sulfone + CoA + H(+). In terms of biological role, plays a role in the resistance against the toxic effects of L-methionine sulfoximine (MSX), a rare amino acid, which inhibits glutamine synthetase (GlnA). Catalyzes the acetylation of L-methionine sulfoximine (MSX). It can also use L-methionine sulfone (MSO). This Pseudomonas paraeruginosa (strain DSM 24068 / PA7) (Pseudomonas aeruginosa (strain PA7)) protein is L-methionine sulfoximine/L-methionine sulfone acetyltransferase.